The sequence spans 297 residues: Transcription factor bHLH129 (297 aa).

The tract at residues 1 to 145 is disordered; that stretch reads MYPPNSSKST…SSSHQEHNSL (145 aa). Position 35 is a phosphoserine (Ser35). Residues 68 to 82 show a composition bias toward low complexity; sequence SSIGFDSNASSSSSL. Positions 111 to 121 are enriched in gly residues; sequence PNGGYGGGGEQ. Ser138 is subject to Phosphoserine. The bHLH domain occupies 239 to 289; it reads FATHPRSIAERERRTRISGKLKKLQELVPNMDKQTSYADMLDLAVEHIKGL.

In terms of assembly, homodimer.

The protein resides in the nucleus. This Arabidopsis thaliana (Mouse-ear cress) protein is Transcription factor bHLH129 (BHLH129).